A 207-amino-acid chain; its full sequence is Superoxide dismutase [Mn] (207 aa).

Positions 28, 76, 160, and 164 each coordinate Mn(2+).

This sequence belongs to the iron/manganese superoxide dismutase family. Mn(2+) is required as a cofactor.

It carries out the reaction 2 superoxide + 2 H(+) = H2O2 + O2. Functionally, destroys superoxide anion radicals which are normally produced within the cells and which are toxic to biological systems. In Mycobacterium avium, this protein is Superoxide dismutase [Mn] (sodA).